Consider the following 313-residue polypeptide: tRNA dimethylallyltransferase (313 aa).

10–17 (GPTASGKT) is an ATP binding site. Residue 12–17 (TASGKT) coordinates substrate. Interaction with substrate tRNA stretches follow at residues 35–38 (DSAM), 159–163 (QRIQR), and 240–245 (RCVGYR).

Belongs to the IPP transferase family. Monomer. It depends on Mg(2+) as a cofactor.

It catalyses the reaction adenosine(37) in tRNA + dimethylallyl diphosphate = N(6)-dimethylallyladenosine(37) in tRNA + diphosphate. In terms of biological role, catalyzes the transfer of a dimethylallyl group onto the adenine at position 37 in tRNAs that read codons beginning with uridine, leading to the formation of N6-(dimethylallyl)adenosine (i(6)A). This chain is tRNA dimethylallyltransferase, found in Legionella pneumophila subsp. pneumophila (strain Philadelphia 1 / ATCC 33152 / DSM 7513).